A 503-amino-acid chain; its full sequence is Apolipoprotein N-acyltransferase (503 aa).

Helical transmembrane passes span arginine 13–leucine 32, methionine 34–valine 54, alanine 63–proline 83, isoleucine 102–leucine 122, tyrosine 124–phenylalanine 144, isoleucine 173–phenylalanine 193, and leucine 203–leucine 223. The CN hydrolase domain maps to phenylalanine 231–alanine 460. The active-site Proton acceptor is glutamate 273. Lysine 321 is an active-site residue. The active-site Nucleophile is cysteine 371. The helical transmembrane segment at valine 468–isoleucine 488 threads the bilayer.

This sequence belongs to the CN hydrolase family. Apolipoprotein N-acyltransferase subfamily.

It is found in the cell inner membrane. The enzyme catalyses N-terminal S-1,2-diacyl-sn-glyceryl-L-cysteinyl-[lipoprotein] + a glycerophospholipid = N-acyl-S-1,2-diacyl-sn-glyceryl-L-cysteinyl-[lipoprotein] + a 2-acyl-sn-glycero-3-phospholipid + H(+). It participates in protein modification; lipoprotein biosynthesis (N-acyl transfer). Functionally, catalyzes the phospholipid dependent N-acylation of the N-terminal cysteine of apolipoprotein, the last step in lipoprotein maturation. The chain is Apolipoprotein N-acyltransferase from Thermotoga maritima (strain ATCC 43589 / DSM 3109 / JCM 10099 / NBRC 100826 / MSB8).